The primary structure comprises 74 residues: MDVRGPEAPGGRALRDAAENLFQELQEHFQALTATLNLRMEEMGNRIEDLQKNVKDLMVQAGIENSIKEQMLKT.

The stretch at 12–65 (RALRDAAENLFQELQEHFQALTATLNLRMEEMGNRIEDLQKNVKDLMVQAGIEN) forms a coiled coil.

It belongs to the HSBP1 family.

The protein is Heat shock factor-binding protein 1-like protein 1 (HSBP1L1) of Homo sapiens (Human).